The chain runs to 331 residues: MKKVIFSGIQPSGQLTLGNYIGALKQFGQFQDEYECFYCIVDEHAITVPQDRLKLREQTRSLAALYLAVGLDPEKATLFIQSEVAAHAQAAWILQCNVYIGELERMTQFKDKSDGKAGVSAGLLTYPPLMAADILLYQTDLVPVGEDQKQHIELTRDLAERFNKKHADIFTMPEVFIPKQGARVMSLQDPTKKMSKSDANLKNAIFLLDPPATIRKKIKSAVTDSSGIIEYNKEEKPGVSNLLTIYSVITGETISTIEEKYVGKGYGDFKTDLAELVVAELEPIQERYYAYLKSEELDTILDAGAEKAARVANKTLKKMENGVGLGRKRRR.

ATP-binding positions include 10-12 and 18-19; these read QPS and GN. Positions 11–19 match the 'HIGH' region motif; it reads PSGQLTLGN. L-tryptophan is bound at residue D133. Residues 145-147, V184, and 193-197 each bind ATP; these read GED and KMSKS. A 'KMSKS' region motif is present at residues 193-197; it reads KMSKS.

Belongs to the class-I aminoacyl-tRNA synthetase family. As to quaternary structure, homodimer.

It is found in the cytoplasm. It carries out the reaction tRNA(Trp) + L-tryptophan + ATP = L-tryptophyl-tRNA(Trp) + AMP + diphosphate + H(+). Its function is as follows. Catalyzes the attachment of tryptophan to tRNA(Trp). The sequence is that of Tryptophan--tRNA ligase from Listeria monocytogenes serotype 4b (strain F2365).